We begin with the raw amino-acid sequence, 1503 residues long: Protein Skeletor, isoforms D/E (1503 aa).

An N-terminal signal peptide occupies residues 1 to 28 (MLAMKDKPWLLLFGLLAALSCLASFGDA). DM13 domains follow at residues 34-143 (GTKI…VSIP) and 151-258 (PQKI…VRLP). The 133-residue stretch at 287–419 (LAFEVRWAVA…GAESVVWAIG (133 aa)) folds into the DOMON domain. 4 disordered regions span residues 451–491 (PLPE…NVEP), 830–857 (NPNL…PTEI), 1086–1106 (IFNQ…SSVS), and 1426–1503 (EFRG…GRRA). Residues 830–840 (NPNLNPNHPNQ) are compositionally biased toward low complexity. Positions 1452–1491 (SSSSGSTIYPYSSSTGASTSTVSSSASSPLSSSSLRPIST) are enriched in low complexity.

Interacts with Chro and Mgtor as part of a macromolecular complex forming the spindle matrix. Chro colocalizes with Skeletor (Skel) on the chromosomes at interphase and on spindle during metaphase.

It localises to the cytoplasm. The protein resides in the cytoskeleton. The protein localises to the spindle. Its subcellular location is the nucleus. It is found in the nucleolus. It localises to the chromosome. Its function is as follows. Provides structural support to stabilize and organize the microtubule spindle during mitosis (within embryonic somatic cells) and meiosis (within spermatocytes). The role in mitosis regulation depends on the Ran pathway. In Drosophila melanogaster (Fruit fly), this protein is Protein Skeletor, isoforms D/E.